Here is a 271-residue protein sequence, read N- to C-terminus: Metal-staphylopine import system ATP-binding protein CntD (271 aa).

Residues 6–251 (VKHLTITDTW…PEHVYTKYLL (246 aa)) form the ABC transporter domain. Residue 38–45 (GESGSGKS) participates in ATP binding.

The protein belongs to the ABC transporter superfamily. The complex is composed of two ATP-binding proteins (CntD and CntF), two transmembrane proteins (CntB and CntC) and a solute-binding protein (CntA).

The protein localises to the cell membrane. In terms of biological role, part of the ABC transporter complex CntABCDF (Opp1) involved in the uptake of metal in complex with the metallophore staphylopine (StP). May be involved in the import of a large array of divalent metals ions such as nickel, cobalt, zinc, copper and iron. Probably responsible for energy coupling to the transport system. This is Metal-staphylopine import system ATP-binding protein CntD from Staphylococcus aureus (strain Mu50 / ATCC 700699).